A 244-amino-acid polypeptide reads, in one-letter code: NAD(P)H-quinone oxidoreductase subunit K (244 aa).

Cys60, Cys61, Cys125, and Cys156 together coordinate [4Fe-4S] cluster. Residues 221–236 (SKKEKITELPENREQT) are compositionally biased toward basic and acidic residues. The interval 221-244 (SKKEKITELPENREQTEIINSEEE) is disordered.

The protein belongs to the complex I 20 kDa subunit family. In terms of assembly, NDH-1 can be composed of about 15 different subunits; different subcomplexes with different compositions have been identified which probably have different functions. [4Fe-4S] cluster is required as a cofactor.

It is found in the cellular thylakoid membrane. The enzyme catalyses a plastoquinone + NADH + (n+1) H(+)(in) = a plastoquinol + NAD(+) + n H(+)(out). It carries out the reaction a plastoquinone + NADPH + (n+1) H(+)(in) = a plastoquinol + NADP(+) + n H(+)(out). Its function is as follows. NDH-1 shuttles electrons from an unknown electron donor, via FMN and iron-sulfur (Fe-S) centers, to quinones in the respiratory and/or the photosynthetic chain. The immediate electron acceptor for the enzyme in this species is believed to be plastoquinone. Couples the redox reaction to proton translocation, and thus conserves the redox energy in a proton gradient. Cyanobacterial NDH-1 also plays a role in inorganic carbon-concentration. This Prochlorococcus marinus (strain MIT 9312) protein is NAD(P)H-quinone oxidoreductase subunit K.